Reading from the N-terminus, the 634-residue chain is DNA-directed RNA polymerase subunit gamma (634 aa).

Zn(2+) contacts are provided by Cys-74, Cys-76, Cys-89, and Cys-92. Positions 471, 473, and 475 each coordinate Mg(2+).

The protein belongs to the RNA polymerase beta' chain family. RpoC1 subfamily. In terms of assembly, in cyanobacteria the RNAP catalytic core is composed of 2 alpha, 1 beta, 1 beta', 1 gamma and 1 omega subunit. When a sigma factor is associated with the core the holoenzyme is formed, which can initiate transcription. Requires Mg(2+) as cofactor. Zn(2+) is required as a cofactor.

It catalyses the reaction RNA(n) + a ribonucleoside 5'-triphosphate = RNA(n+1) + diphosphate. DNA-dependent RNA polymerase catalyzes the transcription of DNA into RNA using the four ribonucleoside triphosphates as substrates. This Prochlorococcus marinus (strain MIT 9303) protein is DNA-directed RNA polymerase subunit gamma.